Here is a 279-residue protein sequence, read N- to C-terminus: Peptide deformylase 1B, chloroplastic (279 aa).

Fe cation-binding residues include cysteine 177 and histidine 219. Residue glutamate 220 is part of the active site. A Fe cation-binding site is contributed by histidine 223.

Belongs to the polypeptide deformylase family. Fe(2+) serves as cofactor.

It is found in the plastid. It localises to the chloroplast. The catalysed reaction is N-terminal N-formyl-L-methionyl-[peptide] + H2O = N-terminal L-methionyl-[peptide] + formate. In terms of biological role, removes the formyl group from the N-terminal Met of newly synthesized proteins. The chain is Peptide deformylase 1B, chloroplastic (PDF1B) from Solanum lycopersicum (Tomato).